The chain runs to 354 residues: Type II restriction enzyme BanI (354 aa).

In terms of assembly, homodimer.

The enzyme catalyses Endonucleolytic cleavage of DNA to give specific double-stranded fragments with terminal 5'-phosphates.. Functionally, a P subtype restriction enzyme that recognizes the double-stranded sequence 5'-GGYRCC-3' and cleaves after G-1. This is Type II restriction enzyme BanI (banIR) from Aneurinibacillus aneurinilyticus (Bacillus aneurinolyticus).